The sequence spans 245 residues: 1-(5-phosphoribosyl)-5-[(5-phosphoribosylamino)methylideneamino] imidazole-4-carboxamide isomerase (245 aa).

The active-site Proton acceptor is the D7. Catalysis depends on D129, which acts as the Proton donor.

Belongs to the HisA/HisF family.

Its subcellular location is the cytoplasm. The catalysed reaction is 1-(5-phospho-beta-D-ribosyl)-5-[(5-phospho-beta-D-ribosylamino)methylideneamino]imidazole-4-carboxamide = 5-[(5-phospho-1-deoxy-D-ribulos-1-ylimino)methylamino]-1-(5-phospho-beta-D-ribosyl)imidazole-4-carboxamide. It functions in the pathway amino-acid biosynthesis; L-histidine biosynthesis; L-histidine from 5-phospho-alpha-D-ribose 1-diphosphate: step 4/9. This is 1-(5-phosphoribosyl)-5-[(5-phosphoribosylamino)methylideneamino] imidazole-4-carboxamide isomerase from Aliivibrio fischeri (strain MJ11) (Vibrio fischeri).